The chain runs to 122 residues: Large ribosomal subunit protein bL12 (122 aa).

It belongs to the bacterial ribosomal protein bL12 family. In terms of assembly, homodimer. Part of the ribosomal stalk of the 50S ribosomal subunit. Forms a multimeric L10(L12)X complex, where L10 forms an elongated spine to which 2 to 4 L12 dimers bind in a sequential fashion. Binds GTP-bound translation factors.

Forms part of the ribosomal stalk which helps the ribosome interact with GTP-bound translation factors. Is thus essential for accurate translation. This Neisseria lactamica protein is Large ribosomal subunit protein bL12.